Here is a 394-residue protein sequence, read N- to C-terminus: NAD(P)H-quinone oxidoreductase subunit H (394 aa).

Belongs to the complex I 49 kDa subunit family. In terms of assembly, NDH-1 can be composed of about 15 different subunits; different subcomplexes with different compositions have been identified which probably have different functions.

Its subcellular location is the cellular thylakoid membrane. It catalyses the reaction a plastoquinone + NADH + (n+1) H(+)(in) = a plastoquinol + NAD(+) + n H(+)(out). It carries out the reaction a plastoquinone + NADPH + (n+1) H(+)(in) = a plastoquinol + NADP(+) + n H(+)(out). NDH-1 shuttles electrons from an unknown electron donor, via FMN and iron-sulfur (Fe-S) centers, to quinones in the respiratory and/or the photosynthetic chain. The immediate electron acceptor for the enzyme in this species is believed to be plastoquinone. Couples the redox reaction to proton translocation, and thus conserves the redox energy in a proton gradient. Cyanobacterial NDH-1 also plays a role in inorganic carbon-concentration. The polypeptide is NAD(P)H-quinone oxidoreductase subunit H (Synechococcus sp. (strain CC9605)).